A 712-amino-acid polypeptide reads, in one-letter code: Polyribonucleotide nucleotidyltransferase (712 aa).

Mg(2+) contacts are provided by aspartate 487 and aspartate 493. A KH domain is found at 554-613; that stretch reads PKILTMQINPEKIREVIGPSGKQINKIIDETGVKIDIEQDGTIFISSVNEAMNQKAKQII. The region spanning 623–691 is the S1 motif domain; that stretch reads GQIYLGKVKR…KQGRVNLSRK (69 aa).

The protein belongs to the polyribonucleotide nucleotidyltransferase family. It depends on Mg(2+) as a cofactor.

The protein localises to the cytoplasm. It carries out the reaction RNA(n+1) + phosphate = RNA(n) + a ribonucleoside 5'-diphosphate. In terms of biological role, involved in mRNA degradation. Catalyzes the phosphorolysis of single-stranded polyribonucleotides processively in the 3'- to 5'-direction. The polypeptide is Polyribonucleotide nucleotidyltransferase (Geobacillus sp. (strain WCH70)).